The primary structure comprises 209 residues: NAD-reducing hydrogenase HoxS subunit delta (209 aa).

Tetramer of an alpha and a gamma subunits (flavin-containing dimer), and a delta and a nickel-containing beta subunits (hydrogenase dimer). [4Fe-4S] cluster is required as a cofactor. The cofactor is [3Fe-4S] cluster. Requires [2Fe-2S] cluster as cofactor. FMN serves as cofactor. It depends on Ni(2+) as a cofactor.

The protein resides in the cytoplasm. It carries out the reaction H2 + NAD(+) = NADH + H(+). In Cupriavidus necator (strain ATCC 17699 / DSM 428 / KCTC 22496 / NCIMB 10442 / H16 / Stanier 337) (Ralstonia eutropha), this protein is NAD-reducing hydrogenase HoxS subunit delta (hoxY).